The chain runs to 226 residues: Pathogenesis-related protein R major form (226 aa).

A signal peptide spans 1–25; it reads MNFLKSFPFFAFLYFGQYFVAVTHA. Intrachain disulfides connect Cys34/Cys225, Cys75/Cys85, Cys90/Cys96, Cys140/Cys214, Cys145/Cys197, Cys153/Cys163, Cys167/Cys176, and Cys177/Cys184.

Belongs to the thaumatin family.

The protein resides in the vacuole. The chain is Pathogenesis-related protein R major form from Nicotiana tabacum (Common tobacco).